The primary structure comprises 513 residues: ATP synthase subunit alpha (513 aa).

169–176 lines the ATP pocket; it reads GDRQTGKT.

It belongs to the ATPase alpha/beta chains family. As to quaternary structure, F-type ATPases have 2 components, CF(1) - the catalytic core - and CF(0) - the membrane proton channel. CF(1) has five subunits: alpha(3), beta(3), gamma(1), delta(1), epsilon(1). CF(0) has three main subunits: a(1), b(2) and c(9-12). The alpha and beta chains form an alternating ring which encloses part of the gamma chain. CF(1) is attached to CF(0) by a central stalk formed by the gamma and epsilon chains, while a peripheral stalk is formed by the delta and b chains.

The protein resides in the cell inner membrane. The enzyme catalyses ATP + H2O + 4 H(+)(in) = ADP + phosphate + 5 H(+)(out). Produces ATP from ADP in the presence of a proton gradient across the membrane. The alpha chain is a regulatory subunit. This is ATP synthase subunit alpha from Hydrogenovibrio crunogenus (strain DSM 25203 / XCL-2) (Thiomicrospira crunogena).